The chain runs to 419 residues: UDP-N-acetylglucosamine 1-carboxyvinyltransferase (419 aa).

22-23 (KN) contacts phosphoenolpyruvate. Position 91 (R91) interacts with UDP-N-acetyl-alpha-D-glucosamine. C115 acts as the Proton donor in catalysis. C115 carries the 2-(S-cysteinyl)pyruvic acid O-phosphothioketal modification. Residues 120-124 (RPVDL), 160-163 (KVSV), D305, and V327 contribute to the UDP-N-acetyl-alpha-D-glucosamine site.

This sequence belongs to the EPSP synthase family. MurA subfamily.

The protein localises to the cytoplasm. The enzyme catalyses phosphoenolpyruvate + UDP-N-acetyl-alpha-D-glucosamine = UDP-N-acetyl-3-O-(1-carboxyvinyl)-alpha-D-glucosamine + phosphate. It participates in cell wall biogenesis; peptidoglycan biosynthesis. Cell wall formation. Adds enolpyruvyl to UDP-N-acetylglucosamine. This chain is UDP-N-acetylglucosamine 1-carboxyvinyltransferase, found in Escherichia fergusonii (strain ATCC 35469 / DSM 13698 / CCUG 18766 / IAM 14443 / JCM 21226 / LMG 7866 / NBRC 102419 / NCTC 12128 / CDC 0568-73).